A 1476-amino-acid chain; its full sequence is Glucosyltransferase-I (1476 aa).

Positions 1 to 34 are cleaved as a signal peptide; the sequence is MDKKVRYKLRKVKKRWVTVSVASAVMTLTTLSGG. 2 disordered regions span residues 42–89 and 102–141; these read ESKS…ISSS and PYTV…TEAD. Polar residues-rich tracts occupy residues 43 to 81 and 102 to 139; these read SKSQ…QTNH and PYTV…QTTE. 2 Cell wall-binding repeats span residues 159 to 178 and 179 to 199; these read LPNV…NGKV and RTNF…TGAY. The segment at 200–1051 is catalytic; approximate; that stretch reads TDTSIDTVNK…NTYFNISDNK (852 aa). Cell wall-binding repeat units follow at residues 1087–1106, 1107–1126, 1170–1189, 1214–1234, 1235–1254, 1279–1299, 1300–1319, 1344–1364, 1365–1384, 1409–1429, and 1430–1449; these read KNTF…NGYM, VTGA…NGLQ, SVGL…MGYQ, RNRF…DGAA, VTGS…NGVQ, RNRF…NGYA, and VTGA…NGVQ.

This sequence belongs to the glycosyl hydrolase 70 family.

It localises to the secreted. It carries out the reaction [(1-&gt;6)-alpha-D-glucosyl](n) + sucrose = [(1-&gt;6)-alpha-D-glucosyl](n+1) + D-fructose. Production of extracellular glucans, that are thought to play a key role in the development of the dental plaque because of their ability to adhere to smooth surfaces and mediate the aggregation of bacterial cells and food debris. This is Glucosyltransferase-I (gtfB) from Streptococcus mutans serotype c (strain ATCC 700610 / UA159).